Reading from the N-terminus, the 515-residue chain is Maturase K (515 aa).

It belongs to the intron maturase 2 family. MatK subfamily.

The protein resides in the plastid. Its subcellular location is the chloroplast. Usually encoded in the trnK tRNA gene intron. Probably assists in splicing its own and other chloroplast group II introns. The protein is Maturase K of Zingiber mioga (Myoga ginger).